A 364-amino-acid chain; its full sequence is tRNA-specific 2-thiouridylase MnmA 1 (364 aa).

ATP-binding positions include 10–17 and methionine 36; that span reads GMSGGVDS. Residue cysteine 106 is the Nucleophile of the active site. A disulfide bond links cysteine 106 and cysteine 204. Glycine 130 contacts ATP. Residues 154–156 are interaction with tRNA; sequence KDQ. The Cysteine persulfide intermediate role is filled by cysteine 204. The interval 310 to 311 is interaction with tRNA; the sequence is RY.

Belongs to the MnmA/TRMU family.

Its subcellular location is the cytoplasm. The enzyme catalyses S-sulfanyl-L-cysteinyl-[protein] + uridine(34) in tRNA + AH2 + ATP = 2-thiouridine(34) in tRNA + L-cysteinyl-[protein] + A + AMP + diphosphate + H(+). Its function is as follows. Catalyzes the 2-thiolation of uridine at the wobble position (U34) of tRNA, leading to the formation of s(2)U34. This Thermoanaerobacter sp. (strain X514) protein is tRNA-specific 2-thiouridylase MnmA 1.